The following is a 602-amino-acid chain: Aspartate--tRNA(Asp/Asn) ligase (602 aa).

Glu-170 contributes to the L-aspartate binding site. Residues 194–197 (QLFK) form an aspartate region. Residue Arg-216 coordinates L-aspartate. ATP-binding positions include 216 to 218 (RDE) and Gln-225. His-448 contributes to the L-aspartate binding site. Glu-482 is a binding site for ATP. Residue Arg-489 participates in L-aspartate binding. An ATP-binding site is contributed by 534–537 (GWDR). Residues 559–602 (GGVDPLTSAPAPITAQQRKESGVDAKPEPKGDAAAAKPQVSAEK) form a disordered region. A compositionally biased stretch (basic and acidic residues) spans 575–589 (QRKESGVDAKPEPKG).

This sequence belongs to the class-II aminoacyl-tRNA synthetase family. Type 1 subfamily. Homodimer.

The protein localises to the cytoplasm. The enzyme catalyses tRNA(Asx) + L-aspartate + ATP = L-aspartyl-tRNA(Asx) + AMP + diphosphate. Functionally, aspartyl-tRNA synthetase with relaxed tRNA specificity since it is able to aspartylate not only its cognate tRNA(Asp) but also tRNA(Asn). Reaction proceeds in two steps: L-aspartate is first activated by ATP to form Asp-AMP and then transferred to the acceptor end of tRNA(Asp/Asn). The protein is Aspartate--tRNA(Asp/Asn) ligase of Rhodococcus opacus (strain B4).